The sequence spans 256 residues: Type III pantothenate kinase 1 (256 aa).

6–13 (DIGNSHIF) is an ATP binding site. 107 to 110 (GADR) provides a ligand contact to substrate. Asp109 (proton acceptor) is an active-site residue. Asp130 is a binding site for K(+). Thr133 serves as a coordination point for ATP. Residue Thr185 coordinates substrate.

Belongs to the type III pantothenate kinase family. Homodimer. The cofactor is NH4(+). Requires K(+) as cofactor.

The protein localises to the cytoplasm. It catalyses the reaction (R)-pantothenate + ATP = (R)-4'-phosphopantothenate + ADP + H(+). The protein operates within cofactor biosynthesis; coenzyme A biosynthesis; CoA from (R)-pantothenate: step 1/5. Its function is as follows. Catalyzes the phosphorylation of pantothenate (Pan), the first step in CoA biosynthesis. This is Type III pantothenate kinase 1 from Francisella tularensis subsp. holarctica (strain LVS).